The chain runs to 31 residues: Palustrin-2c (31 aa).

Cysteine 23 and cysteine 29 are joined by a disulfide.

As to expression, expressed by the skin glands.

It localises to the secreted. Functionally, antimicrobial activity against Gram-negative bacterium E.coli. In Lithobates palustris (Pickerel frog), this protein is Palustrin-2c.